The following is a 329-amino-acid chain: Isoaspartyl peptidase/L-asparaginase (329 aa).

The Nucleophile role is filled by T173. Substrate contacts are provided by residues R201–D204 and T222–G225.

It belongs to the Ntn-hydrolase family. Heterotetramer of two alpha and two beta chains arranged as a dimer of alpha/beta heterodimers. In terms of processing, cleaved into an alpha and beta chain by autocatalysis; this activates the enzyme. The N-terminal residue of the beta subunit is responsible for the nucleophile hydrolase activity.

It carries out the reaction Cleavage of a beta-linked Asp residue from the N-terminus of a polypeptide.. Its function is as follows. Degrades proteins damaged by L-isoaspartyl residue formation (also known as beta-Asp residues). Probably performs the final step in the degradation of the reserve polymer cyanophycin (depolymerizes the building block L-beta-Asp-Arg). Also has L-asparaginase activity. The chain is Isoaspartyl peptidase/L-asparaginase from Synechocystis sp. (strain ATCC 27184 / PCC 6803 / Kazusa).